The primary structure comprises 511 residues: MLVDGPSEWPALRFLLLAVAMSFFGSALSIDETRAHLLLKEKMMRLGGRLVLNTKEEQANERLMMLKIAEMKEAMRTLIFPPSMHFFQAKHLIERSQVFNILRMMPKGAALHLHDIGIVTMDWLVRNVTYRPHCHICFTPKGIMQFRFAHPTPRTSEKCSKWILLEDYRKRVQNVTEFDDSLLRNFTLVTQHPEVIYTNQNVVWSKFETIFFTISGLIHYAPVFRDYVFQSMQEFYEDNVLYMEIRARLLPVYELSGEHHDEEWSVKTYQEVAQKFVETHPEFIGIKIIYSDHRSKDVAVIAESIRTAMGLRTKFPTVVAGFDLVGREDTGHSLQDYKEALMIPAKGGVKLPYFFHAGETDWQGTSIDRNILDALMLNTTRIGHGFALSKHPAVRAYSWKKDIPIEVCPISNQVLKLVSDLRNHPVATLMATGHPMVISSDDPAIFGAKGLSYDFYEVFMGIGGMKADLRTLKQLAMNSIKYSALLEIEKNTFMEIWKKRWDKFIADVATK.

An N-terminal signal peptide occupies residues 1–29 (MLVDGPSEWPALRFLLLAVAMSFFGSALS). Positions 30–100 (IDETRAHLLL…HLIERSQVFN (71 aa)) are dimerization. Residues H112 and H114 each contribute to the Zn(2+) site. Position 115 (D115) interacts with substrate. N127 is a glycosylation site (N-linked (GlcNAc...) asparagine). Residues 127–185 (NVTYRPHCHICFTPKGIMQFRFAHPTPRTSEKCSKWILLEDYRKRVQNVTEFDDSLLRN) form a PRB domain region. C137 and C159 are disulfide-bonded. Residues N174 and N185 are each glycosylated (N-linked (GlcNAc...) asparagine). Residues 204–211 (WSKFETIF), H293, and G326 contribute to the substrate site. Residue H356 participates in Zn(2+) binding. E359 functions as the Proton donor in the catalytic mechanism. N378 is a glycosylation site (N-linked (GlcNAc...) asparagine). H384 acts as the Proton acceptor in catalysis. A Zn(2+)-binding site is contributed by D441. Residue D442 coordinates substrate.

It belongs to the metallo-dependent hydrolases superfamily. Adenosine and AMP deaminases family. ADGF subfamily. As to quaternary structure, homodimer. Interacts with adenosine receptors. Binds heparin. It depends on Zn(2+) as a cofactor.

The protein localises to the secreted. The catalysed reaction is adenosine + H2O + H(+) = inosine + NH4(+). Its function is as follows. Adenosine deaminase that may contribute to the degradation of extracellular adenosine, a signaling molecule that controls a variety of cellular responses. Requires elevated adenosine levels for optimal enzyme activity. Binds to cell surfaces via proteoglycans and may play a role in the regulation of cell proliferation and differentiation, independently of its enzyme activity. The polypeptide is Adenosine deaminase 2 (Pongo abelii (Sumatran orangutan)).